Reading from the N-terminus, the 153-residue chain is Large ribosomal subunit protein uL15 (153 aa).

The disordered stretch occupies residues 1-49 (MQLHNLYPFPEERKTRRRVGRGSGSGLGCTAGKGHKGQNARAGGGVAPG). The segment covering 21–31 (RGSGSGLGCTA) has biased composition (gly residues).

Belongs to the universal ribosomal protein uL15 family. As to quaternary structure, part of the 50S ribosomal subunit.

Binds to the 23S rRNA. In Desulfovibrio desulfuricans (strain ATCC 27774 / DSM 6949 / MB), this protein is Large ribosomal subunit protein uL15.